The sequence spans 181 residues: Trafficking protein particle complex subunit 3-like protein (181 aa).

Cys-68 carries the S-palmitoyl cysteine lipid modification.

It belongs to the TRAPP small subunits family. BET3 subfamily. As to quaternary structure, homodimer. Component of the multisubunit TRAPP (transport protein particle) complex, which includes at least TRAPPC2, TRAPPC2L, TRAPPC3, TRAPPC3L, TRAPPC4, TRAPPC5, TRAPPC8, TRAPPC9, TRAPPC10, TRAPPC11 and TRAPPC12.

It localises to the golgi apparatus. Its subcellular location is the cis-Golgi network. It is found in the endoplasmic reticulum. In terms of biological role, may play a role in vesicular transport from endoplasmic reticulum to Golgi. The protein is Trafficking protein particle complex subunit 3-like protein (TRAPPC3L) of Homo sapiens (Human).